Consider the following 118-residue polypeptide: Large ribosomal subunit protein uL18 (118 aa).

Belongs to the universal ribosomal protein uL18 family. In terms of assembly, part of the 50S ribosomal subunit; part of the 5S rRNA/L5/L18/L25 subcomplex. Contacts the 5S and 23S rRNAs.

In terms of biological role, this is one of the proteins that bind and probably mediate the attachment of the 5S RNA into the large ribosomal subunit, where it forms part of the central protuberance. The sequence is that of Large ribosomal subunit protein uL18 from Helicobacter pylori (strain J99 / ATCC 700824) (Campylobacter pylori J99).